The following is a 129-amino-acid chain: Small ribosomal subunit protein uS11 (129 aa).

This sequence belongs to the universal ribosomal protein uS11 family. In terms of assembly, part of the 30S ribosomal subunit. Interacts with proteins S7 and S18. Binds to IF-3.

Functionally, located on the platform of the 30S subunit, it bridges several disparate RNA helices of the 16S rRNA. Forms part of the Shine-Dalgarno cleft in the 70S ribosome. This Methylocella silvestris (strain DSM 15510 / CIP 108128 / LMG 27833 / NCIMB 13906 / BL2) protein is Small ribosomal subunit protein uS11.